We begin with the raw amino-acid sequence, 273 residues long: Patr class II histocompatibility antigen, DO beta chain (273 aa).

An N-terminal signal peptide occupies residues 1–26 (MGSGWVPWVVALLVNLTRLDSSMTQG). A beta-1 region spans residues 27 to 120 (TDSPEDFVIQ…LGAPFTVGRK (94 aa)). Residues 27–224 (TDSPEDFVIQ…RAQSEYSWKK (198 aa)) are Extracellular-facing. Cystine bridges form between Cys-41/Cys-105 and Cys-143/Cys-199. N-linked (GlcNAc...) asparagine glycosylation occurs at Asn-45. The tract at residues 121–214 (VQPEVTVYPE…SLLSPVSVEW (94 aa)) is beta-2. One can recognise an Ig-like C1-type domain in the interval 123–213 (PEVTVYPERT…SSLLSPVSVE (91 aa)). Residues 215-224 (RAQSEYSWKK) form a connecting peptide region. A helical membrane pass occupies residues 225–245 (MLSGIAAFLLGLIFLLVGIVI). At 246 to 273 (QLRAQKGYVRTQMSGNEVSRAVLLPQSC) the chain is on the cytoplasmic side.

This sequence belongs to the MHC class II family. Heterodimer of an alpha chain (DOA) and a beta chain (DOB). Forms a heterotetrameric complex with an HLA-DM molecule during intracellular transport in endosomal/lysosomal compartments in B-cells.

Its subcellular location is the endosome membrane. It is found in the lysosome membrane. Important modulator in the HLA class II restricted antigen presentation pathway by interaction with the HLA-DM molecule in B-cells. Modifies peptide exchange activity of HLA-DM. The sequence is that of Patr class II histocompatibility antigen, DO beta chain (Patr-DOB) from Pan troglodytes (Chimpanzee).